A 459-amino-acid polypeptide reads, in one-letter code: Cysteine--tRNA ligase (459 aa).

Cys29 is a binding site for Zn(2+). The short motif at 31–41 (MTVYDLCHLGH) is the 'HIGH' region element. The Zn(2+) site is built by Cys213, His238, and Glu242. Residues 270–274 (KMSKS) carry the 'KMSKS' region motif. Lys273 serves as a coordination point for ATP.

Belongs to the class-I aminoacyl-tRNA synthetase family. As to quaternary structure, monomer. Zn(2+) is required as a cofactor.

It is found in the cytoplasm. It catalyses the reaction tRNA(Cys) + L-cysteine + ATP = L-cysteinyl-tRNA(Cys) + AMP + diphosphate. The chain is Cysteine--tRNA ligase from Variovorax paradoxus (strain S110).